The chain runs to 543 residues: Nucleoside-triphosphatase ntp-1 (543 aa).

A helical membrane pass occupies residues 40–60 (VYGFLLTCTCLLLILTIIPMS). Glu212 serves as the catalytic Proton acceptor. A helical membrane pass occupies residues 497-517 (QISNFFSFFVILIIVLAVALY).

It belongs to the GDA1/CD39 NTPase family.

The protein localises to the golgi apparatus membrane. It catalyses the reaction a ribonucleoside 5'-triphosphate + H2O = a ribonucleoside 5'-diphosphate + phosphate + H(+). Seems to be able to hydrolyze CTP, ATP and UTP. The protein is Nucleoside-triphosphatase ntp-1 of Caenorhabditis elegans.